A 255-amino-acid polypeptide reads, in one-letter code: Vitamin B12 import ATP-binding protein BtuD (255 aa).

The ABC transporter domain occupies 2–240 (MRVKHIAVGS…AGLAEVFKTQ (239 aa)). 30–37 (GPNGSGKS) lines the ATP pocket.

Belongs to the ABC transporter superfamily. Vitamin B12 importer (TC 3.A.1.13.1) family. The complex is composed of two ATP-binding proteins (BtuD), two transmembrane proteins (BtuC) and a solute-binding protein (BtuF).

The protein resides in the cell inner membrane. It carries out the reaction an R-cob(III)alamin(out) + ATP + H2O = an R-cob(III)alamin(in) + ADP + phosphate + H(+). Functionally, part of the ABC transporter complex BtuCDF involved in vitamin B12 import. Responsible for energy coupling to the transport system. In Vibrio parahaemolyticus serotype O3:K6 (strain RIMD 2210633), this protein is Vitamin B12 import ATP-binding protein BtuD.